Consider the following 461-residue polypeptide: Gram-negative bacteria-binding protein 2 (461 aa).

The signal sequence occupies residues 1–20 (MRWEFLPCLLLLISNNKIFG). The 95-residue stretch at 21–115 (FKVPSINFEM…TRVIINTRLL (95 aa)) folds into the CBM39 domain. N-linked (GlcNAc...) asparagine glycans are attached at residues N71, N170, N177, and N364. The GH16 domain occupies 179–461 (TTWKHDIRQR…VIDYVRVYAE (283 aa)).

It belongs to the insect beta-1,3-glucan binding protein family.

The protein localises to the secreted. Functionally, involved in the recognition of invading microorganisms. Binds specifically to beta-1,3-glucan and activates the phenoloxidase cascade. In Drosophila melanogaster (Fruit fly), this protein is Gram-negative bacteria-binding protein 2.